We begin with the raw amino-acid sequence, 97 residues long: DNA-directed RNA polymerase subunit omega (97 aa).

The protein belongs to the RNA polymerase subunit omega family. The RNAP catalytic core consists of 2 alpha, 1 beta, 1 beta' and 1 omega subunit. When a sigma factor is associated with the core the holoenzyme is formed, which can initiate transcription.

The enzyme catalyses RNA(n) + a ribonucleoside 5'-triphosphate = RNA(n+1) + diphosphate. Its function is as follows. Promotes RNA polymerase assembly. Latches the N- and C-terminal regions of the beta' subunit thereby facilitating its interaction with the beta and alpha subunits. The polypeptide is DNA-directed RNA polymerase subunit omega (Coxiella burnetii (strain Dugway 5J108-111)).